Reading from the N-terminus, the 390-residue chain is 23S rRNA (uracil(747)-C(5))-methyltransferase RlmC (390 aa).

The [4Fe-4S] cluster site is built by Cys-12, Cys-20, Cys-23, and Cys-100. Positions 225, 254, 275, and 322 each coordinate S-adenosyl-L-methionine. Catalysis depends on Cys-349, which acts as the Nucleophile.

This sequence belongs to the class I-like SAM-binding methyltransferase superfamily. RNA M5U methyltransferase family. RlmC subfamily.

It carries out the reaction uridine(747) in 23S rRNA + S-adenosyl-L-methionine = 5-methyluridine(747) in 23S rRNA + S-adenosyl-L-homocysteine + H(+). Catalyzes the formation of 5-methyl-uridine at position 747 (m5U747) in 23S rRNA. This chain is 23S rRNA (uracil(747)-C(5))-methyltransferase RlmC, found in Shewanella baltica (strain OS185).